The primary structure comprises 106 residues: 3-oxoacyl-[acyl-carrier-protein] reductase (106 aa).

It belongs to the short-chain dehydrogenases/reductases (SDR) family. Homotetramer. As to expression, mesocarp.

Its subcellular location is the plastid. The protein resides in the chloroplast. It carries out the reaction a (3R)-hydroxyacyl-[ACP] + NADP(+) = a 3-oxoacyl-[ACP] + NADPH + H(+). Its pathway is lipid metabolism; fatty acid biosynthesis. The polypeptide is 3-oxoacyl-[acyl-carrier-protein] reductase (Persea americana (Avocado)).